The following is a 1880-amino-acid chain: Nonribosomal peptide synthetase otaB (1880 aa).

The interval 205 to 594 is adenylation 1; the sequence is AQAVERGNSI…SVSFVGRRQA (390 aa). One can recognise a Carrier domain in the interval 728–804; the sequence is LPLSPLERQI…ELGAHLEQEA (77 aa). O-(pantetheine 4'-phosphoryl)serine is present on S765. The condensation stretch occupies residues 840–1250; it reads EDVYPCTALQ…LLSPQDQQQL (411 aa). Residues 1269–1665 are adenylation 2; that stretch reads QRQCLAHPQK…GRKDRQVKLR (397 aa).

This sequence belongs to the NRP synthetase family.

The catalysed reaction is 7-carboxymellein + L-phenylalanine + ATP = ochratoxin B + ADP + phosphate + H(+). Its pathway is mycotoxin biosynthesis. Its function is as follows. Nonribosomal peptide synthetase; part of the gene cluster that mediates the biosynthesis of ochratoxin A (OTA), a mycotoxin composed of a chlorinated type I polyketide dihydroisocoumarin moiety linked to L-phenylalanine, and demonstrated to have nephrotoxic, immunotoxic, genotoxic, neurotoxic, and teratogenic properties. OtaB is responsible for the linking of phenylalanine to the dihydroisocoumarin ring. The pathway begins with the highly reducing polyketide synthase otaA that catalyzes the formation of the isocoumarin group during the initial stages of biosynthesis, starting from one acetate and 4 malonate units, to originate the characteristic pentaketide skeleton 7-methylmellein (7-MM) of the OTA molecule. The newly identified cyclase otaY might be involved in the polyketide cyclization reaction during the initial steps of the OTA biosynthesis. 7-MM is then oxidized into 7-carboxymellein (also called ochratoxin beta) by the cytochrome P450 monooxygenase otaC. The NRPS encoded by the otaB gene is involved in the linking of phenylalanine to the dihydroisocoumarin ring. The reaction catalyzed by NRPS results in the production of ochratoxin B (OTB), which is the non-chlorinated analog of OTA and which subsequently serves as the substrate of the halogenase otaD for chlorination activity to form the final molecular structure of OTA, containing a chlorine atom in the C-5 position of the molecule. The polypeptide is Nonribosomal peptide synthetase otaB (Aspergillus niger (strain ATCC MYA-4892 / CBS 513.88 / FGSC A1513)).